The following is an 81-amino-acid chain: Trefoil factor 3 (81 aa).

Positions 1–22 (METRALWLMLLVVLVAGSSGIA) are cleaved as a signal peptide. One can recognise a P-type domain in the interval 31–74 (SQCMVPANVRVDCGYPSVTSEQCNNRGCCFDSSIPNVPWCFKPL). Disulfide bonds link Cys33–Cys59, Cys43–Cys58, and Cys53–Cys70.

In terms of assembly, monomer. Homodimer; disulfide-linked. As to expression, expressed in goblet cells of the intestines and colon (at protein level). Expressed abundantly in goblet cells of intestine and colon, and at low levels in stomach. No expression in brain, lung, spleen, kidney, uterus, pancreas, liver, heart or thymus.

Its subcellular location is the secreted. It is found in the extracellular space. It localises to the extracellular matrix. The protein resides in the cytoplasm. Functionally, involved in the maintenance and repair of the intestinal mucosa. Promotes the mobility of epithelial cells in healing processes (motogen). This chain is Trefoil factor 3 (Tff3), found in Mus musculus (Mouse).